The following is a 176-amino-acid chain: ATP-dependent protease subunit HslV (176 aa).

Residue T2 is part of the active site. Residues G157, C160, and T163 each coordinate Na(+).

It belongs to the peptidase T1B family. HslV subfamily. As to quaternary structure, a double ring-shaped homohexamer of HslV is capped on each side by a ring-shaped HslU homohexamer. The assembly of the HslU/HslV complex is dependent on binding of ATP.

It localises to the cytoplasm. The enzyme catalyses ATP-dependent cleavage of peptide bonds with broad specificity.. Allosterically activated by HslU binding. In terms of biological role, protease subunit of a proteasome-like degradation complex believed to be a general protein degrading machinery. The chain is ATP-dependent protease subunit HslV from Pseudomonas entomophila (strain L48).